The following is an 86-amino-acid chain: Heat shock factor-binding protein (86 aa).

Positions 34–63 (MSDSIITKIDDMGGRINELEQSINDLRAEM) form a coiled coil. A required for interactions with heat shock factors (HSFs) region spans residues 42–52 (IDDMGGRINEL). The segment at 59–86 (LRAEMGVEGTPPPASKSGDEPKTPASSS) is disordered.

It belongs to the HSBP1 family. Homohexamer. Interacts with HSFA1A, HSFA1B and HSFA2. Mostly expressed in siliques and flowers, and, to a lower extent, in roots, stems and leaves.

It is found in the nucleus. It localises to the cytoplasm. Its subcellular location is the cytosol. In terms of biological role, negative regulator of the heat shock (HS) response. Affects negatively HSFA1B DNA-binding capacity in vitro. Involved in acquired thermotolerance but not basal thermotolerance. Crucial for seed development, after fertilization and during embryogenesis. This chain is Heat shock factor-binding protein, found in Arabidopsis thaliana (Mouse-ear cress).